Reading from the N-terminus, the 240-residue chain is Bactofilin BacP (240 aa).

Positions 116 to 240 (DVEPGRLPAE…KKVVVKKKTR (125 aa)) are interacts with PadC. Residues 117–240 (VEPGRLPAER…KKVVVKKKTR (124 aa)) form a disordered region. The segment covering 126-150 (RPAVVRPTAVTRPTATPARPTIPAA) has biased composition (low complexity). Residues 151-173 (RPMPPPPPSRPTPPPPPARPSAP) show a composition bias toward pro residues. Residues 229–240 (AKKKVVVKKKTR) show a composition bias toward basic residues.

Belongs to the bactofilin family. Interacts with BacN and probably also BacO, the 3 proteins colocalize as an extended structure. Interacts with PadC.

It localises to the cytoplasm. It is found in the cytoskeleton. Its function is as follows. A non-essential component of the chromosome segregation machinery. Positions the ParA-ParB-parS chromosome segregation machinery within the cell; BacP seems to be the most important bactofilin in this process. Forms a heteropolymeric, subpolar scaffold in the cell; BacP probably forms the core, BacO contributes to position and integrity while BacN does not seem to contribute to assembly. The sequence is that of Bactofilin BacP from Myxococcus xanthus (strain DK1622).